We begin with the raw amino-acid sequence, 257 residues long: Ribonuclease PH (257 aa).

Phosphate is bound by residues arginine 88 and 126–128; that span reads GTR.

Belongs to the RNase PH family. Homohexameric ring arranged as a trimer of dimers.

It carries out the reaction tRNA(n+1) + phosphate = tRNA(n) + a ribonucleoside 5'-diphosphate. Functionally, phosphorolytic 3'-5' exoribonuclease that plays an important role in tRNA 3'-end maturation. Removes nucleotide residues following the 3'-CCA terminus of tRNAs; can also add nucleotides to the ends of RNA molecules by using nucleoside diphosphates as substrates, but this may not be physiologically important. Probably plays a role in initiation of 16S rRNA degradation (leading to ribosome degradation) during starvation. The sequence is that of Ribonuclease PH from Nocardia farcinica (strain IFM 10152).